The primary structure comprises 332 residues: DNA-directed RNA polymerase subunit alpha (332 aa).

The tract at residues 1 to 234 is alpha N-terminal domain (alpha-NTD); that stretch reads MTVTANQVLR…DQLSVFGDFT (234 aa). The alpha C-terminal domain (alpha-CTD) stretch occupies residues 248-332; sequence VDPVLLRPID…AGVASHGMLG (85 aa).

The protein belongs to the RNA polymerase alpha chain family. As to quaternary structure, homodimer. The RNAP catalytic core consists of 2 alpha, 1 beta, 1 beta' and 1 omega subunit. When a sigma factor is associated with the core the holoenzyme is formed, which can initiate transcription.

The enzyme catalyses RNA(n) + a ribonucleoside 5'-triphosphate = RNA(n+1) + diphosphate. In terms of biological role, DNA-dependent RNA polymerase catalyzes the transcription of DNA into RNA using the four ribonucleoside triphosphates as substrates. This Stenotrophomonas maltophilia (strain K279a) protein is DNA-directed RNA polymerase subunit alpha.